We begin with the raw amino-acid sequence, 478 residues long: Early growth response protein 4 (478 aa).

The segment at 275–302 (TEGLPALLTPPGGEGGSGGEGGEFLAAP) is disordered. A compositionally biased stretch (gly residues) spans 286–296 (GGEGGSGGEGG). 3 consecutive C2H2-type zinc fingers follow at residues 372-396 (FACP…LRIH), 402-424 (FQCR…VRTH), and 430-452 (FACD…SKVH).

Belongs to the EGR C2H2-type zinc-finger protein family.

It localises to the nucleus. Transcriptional regulator. Recognizes and binds to the DNA sequence 5'-GCGGGGGCG-3' (GSG). Activates the transcription of target genes whose products are required for mitogenesis and differentiation. In Mus musculus (Mouse), this protein is Early growth response protein 4 (Egr4).